The sequence spans 211 residues: Imidazole glycerol phosphate synthase subunit HisH (211 aa).

The region spanning 5 to 211 is the Glutamine amidotransferase type-1 domain; it reads SVALLDYGSG…QLLRNWVDSL (207 aa). The active-site Nucleophile is the Cys83. Residues His192 and Glu194 contribute to the active site.

Heterodimer of HisH and HisF.

The protein resides in the cytoplasm. It catalyses the reaction 5-[(5-phospho-1-deoxy-D-ribulos-1-ylimino)methylamino]-1-(5-phospho-beta-D-ribosyl)imidazole-4-carboxamide + L-glutamine = D-erythro-1-(imidazol-4-yl)glycerol 3-phosphate + 5-amino-1-(5-phospho-beta-D-ribosyl)imidazole-4-carboxamide + L-glutamate + H(+). It carries out the reaction L-glutamine + H2O = L-glutamate + NH4(+). The protein operates within amino-acid biosynthesis; L-histidine biosynthesis; L-histidine from 5-phospho-alpha-D-ribose 1-diphosphate: step 5/9. IGPS catalyzes the conversion of PRFAR and glutamine to IGP, AICAR and glutamate. The HisH subunit catalyzes the hydrolysis of glutamine to glutamate and ammonia as part of the synthesis of IGP and AICAR. The resulting ammonia molecule is channeled to the active site of HisF. This Nocardia farcinica (strain IFM 10152) protein is Imidazole glycerol phosphate synthase subunit HisH.